We begin with the raw amino-acid sequence, 21 residues long: Nigrocin-2HSa (21 aa).

A disulfide bond links cysteine 15 and cysteine 21.

In terms of tissue distribution, expressed by the skin glands.

The protein resides in the secreted. Functionally, has antibacterial activity against the Gram-positive bacterium S.aureus ATCC 25923 (MIC=56 uM) and the Gram-negative bacterium E.coli ATCC 25726 (MIC=28 uM). The sequence is that of Nigrocin-2HSa from Odorrana hosii (Hose's rock frog).